Reading from the N-terminus, the 2327-residue chain is Genome polyprotein (2327 aa).

The Peptidase C28 domain maps to 1-201 (MNTTDCFIAV…WKASVQRKLK (201 aa)). Topologically, residues 1–1475 (MNTTDCFIAV…SFVKRAFKRL (1475 aa)) are cytoplasmic. Catalysis depends on for leader protease activity residues C51, H148, and D163. 2 disordered regions span residues 196–218 (VQRK…QSGN) and 238–265 (QLGD…NTQN). A lipid anchor (N-myristoyl glycine; by host) is attached at G202. Composition is skewed to polar residues over residues 204–218 (GQSS…QSGN) and 238–251 (QLGD…SNEG). Residues 252–265 (STDTTSTHTTNTQN) are compositionally biased toward low complexity. The tract at residues 787-795 (ALLRAATYY) is antigenic epitope. The Cell attachment site motif lies at 864 to 866 (RGD). Positions 1184 to 1348 (NVHIANLCKV…DGYKINNKLD (165 aa)) constitute an SF3 helicase domain. Position 1212 to 1219 (1212 to 1219 (GKSGQGKS)) interacts with ATP. An intramembrane segment occupies 1476-1496 (KENFEIVALCLTLLANIVIMI). At 1497–2327 (RETHKRQKMV…RWVNAVCGDA (831 aa)) the chain is on the cytoplasmic side. Residues 1524-1584 (QTLDEAEKNP…PYAGPLERQR (61 aa)) are disordered. Over residues 1544–1558 (FRERTLPGQKARDDV) the composition is skewed to basic and acidic residues. 3 positions are modified to O-(5'-phospho-RNA)-tyrosine: Y1576, Y1599, and Y1623. Positions 1647–1843 (APPTDLQKMV…YCSCVSRSML (197 aa)) constitute a Peptidase C3 domain. Catalysis depends on H1690, which acts as the For protease 3C activity; Proton donor/acceptor. Catalysis depends on for protease 3C activity residues D1728 and C1807. The Nuclear localization signal motif lies at 1873 to 1881 (MRKTKLAPT). Positions 2091–2209 (RNVWDVDYSA…ASDYDLDFEA (119 aa)) constitute a RdRp catalytic domain. Residue D2195 is the For RdRp activity of the active site.

It belongs to the picornaviruses polyprotein family. As to quaternary structure, interacts with host ISG15. In terms of assembly, interacts (via R-G-D motif) with host ITGAV/ITGB6. Interacts with host MAVS; this interaction inhibits binding of host TRAF3 to MAVS, thereby suppressing interferon-mediated responses. Forms homooligomers. As to quaternary structure, homohexamer. Interacts with host VIM. Interacts with host BECN1. In terms of assembly, interacts with host DCTN3. Interacts with RNA-dependent RNA polymerase; this interaction allows 3B-1 to binds 2 polymerases and act as a primer. It also allows the recruitment of the RNA-dependent RNA polymerase to host membranes. As to quaternary structure, interacts with RNA-dependent RNA polymerase; this interaction allows 3B-2 to act as a primer. In terms of assembly, interacts with RNA-dependent RNA polymerase; this interaction allows 3B-3 to act as a primer. Interacts with 3B-1; this interaction allows 3B-1 to binds 2 polymerases and act as a primer. It also allows the recruitment of the RNA-dependent RNA polymerase to host membranes. Interacts with 3B-2; this interaction allows 3B-2 to act as a primer. Interacts with 3B-3; this interaction allows 3B-3 to act as a primer. Removes six residues from its own C-terminus, generating sLb(pro). Post-translationally, specific enzymatic cleavages in vivo by the viral proteases yield a variety of precursors and mature proteins. The polyprotein seems to be cotranslationally cleaved at the 2A/2B junction by a ribosomal skip from one codon to the next without formation of a peptide bond. This process would release the L-P1-2A peptide from the translational complex. In terms of processing, during virion maturation, immature virions are rendered infectious following cleavage of VP0 into VP4 and VP2. This maturation seems to be an autocatalytic event triggered by the presence of RNA in the capsid and is followed by a conformational change of the particle. Myristoylation is required during RNA encapsidation and formation of the mature virus particle. Post-translationally, uridylylated by the polymerase and covalently linked to the 5'-end of genomic RNA. These uridylylated forms act as a nucleotide-peptide primer for the polymerase.

Its subcellular location is the host nucleus. The protein localises to the host cytoplasm. It is found in the virion. It localises to the host endoplasmic reticulum membrane. The protein resides in the host cytoplasmic vesicle membrane. It catalyses the reaction Autocatalytically cleaves itself from the polyprotein of the foot-and-mouth disease virus by hydrolysis of a Lys-|-Gly bond, but then cleaves host cell initiation factor eIF-4G at bonds -Gly-|-Arg- and -Lys-|-Arg-.. It carries out the reaction a ribonucleoside 5'-triphosphate + H2O = a ribonucleoside 5'-diphosphate + phosphate + H(+). The catalysed reaction is RNA(n) + a ribonucleoside 5'-triphosphate = RNA(n+1) + diphosphate. The enzyme catalyses Selective cleavage of Gln-|-Gly bond in the poliovirus polyprotein. In other picornavirus reactions Glu may be substituted for Gln, and Ser or Thr for Gly.. In terms of biological role, autocatalytically cleaves itself from the polyprotein at the L/VP0 junction. Also cleaves the host translation initiation factors EIF4G1 and EIF4G3, in order to shut off the capped cellular mRNA transcription. Plays a role in counteracting host innate antiviral response using diverse mechanisms. Possesses a deubiquitinase activity acting on both 'Lys-48' and 'Lys-63'-linked polyubiquitin chains. In turn, inhibits the ubiquitination and subsequent activation of key signaling molecules of type I IFN response such as host RIGI, TBK1, TRAF3 and TRAF6. Inhibits host NF-kappa-B activity by inducing a decrease in RELA mRNA levels. Cleaves a peptide bond in the C-terminus of host ISG15, resulting in the damaging of this modifier that can no longer be attached to target proteins. Also cleaves host G3BP1 and G3BP2 in order to inhibit cytoplasmic stress granules assembly. Its function is as follows. Lies on the inner surface of the capsid shell. After binding to the host receptor, the capsid undergoes conformational changes. Capsid protein VP4 is released, capsid protein VP1 N-terminus is externalized, and together, they shape a pore in the host membrane through which the viral genome is translocated into the host cell cytoplasm. After genome has been released, the channel shrinks. Functionally, forms an icosahedral capsid of pseudo T=3 symmetry with capsid proteins VP1 and VP3. The capsid is composed of 60 copies of each capsid protein organized in the form of twelve pentamers and encloses the viral positive strand RNA genome. Upon acidifcation in the endosome, dissociates into pentamers. Forms an icosahedral capsid of pseudo T=3 symmetry with capsid proteins VP0 and VP3. The capsid is composed of 60 copies of each capsid protein organized in the form of twelve pentamers and encloses the viral positive strand RNA genome. Upon acidifcation in the endosome, dissociates into pentamers. In terms of biological role, forms an icosahedral capsid of pseudo T=3 symmetry with capsid proteins VP2 and VP3. The capsid is composed of 60 copies of each capsid protein organized in the form of twelve pentamers and encloses the viral positive strand RNA genome. Mediates cell entry by attachment to an integrin receptor, usually host ITGAV/ITGB6. In addition, targets host MAVS to suppress type I IFN pathway. Upon acidifcation in the endosome, dissociates into pentamers. Its function is as follows. Mediates self-processing of the polyprotein by a translational effect termed 'ribosome skipping'. Mechanistically, 2A-mediated cleavage occurs between the C-terminal glycine and the proline of the downstream protein 2B. In the case of foot-and-mouth disease virus, the 2A oligopeptide is post-translationally 'trimmed' from the C-terminus of the upstream protein 1D by 3C proteinase. Functionally, plays an essential role in the virus replication cycle by acting as a viroporin. Creates a pore in the host endoplasmic reticulum and as a consequence releases Ca2+ in the cytoplasm of infected cell. In turn, high levels of cytoplasmic calcium may trigger membrane trafficking and transport of viral ER-associated proteins to viroplasms, sites of viral genome replication. Associates with and induces structural rearrangements of intracellular membranes. Triggers host autophagy by interacting with host BECN1 and thereby promotes viral replication. Participates in viral replication and interacts with host DHX9. Displays RNA-binding, nucleotide binding and NTPase activities. May play a role in virion morphogenesis and viral RNA encapsidation by interacting with the capsid protein VP3. In terms of biological role, plays important roles in virus replication, virulence and host range. Cooperates with host DDX56 to inhibit IRF3 nuclear translocation and subsequent type I interferon production. Its function is as follows. Covalently linked to the 5'-end of both the positive-strand and negative-strand genomic RNAs. Acts as a genome-linked replication primer. Functionally, cysteine protease that generates mature viral proteins from the precursor polyprotein. In addition to its proteolytic activity, binds to viral RNA and thus influences viral genome replication. RNA and substrate bind cooperatively to the protease. RNA-directed RNA polymerase 3D-POL replicates genomic and antigenomic RNA by recognizing replications specific signals. Covalently attaches UMP to a tyrosine of VPg, which is used to prime RNA synthesis. The positive stranded RNA genome is first replicated at virus induced membranous vesicles, creating a dsRNA genomic replication form. This dsRNA is then used as template to synthesize positive stranded RNA genomes. ss(+)RNA genomes are either translated, replicated or encapsidated. The sequence is that of Genome polyprotein from Bos taurus (Bovine).